A 147-amino-acid polypeptide reads, in one-letter code: Vasopressin-neurophysin 2-copeptin (147 aa).

C1 and C6 form a disulfide bridge. The residue at position 9 (G9) is a Glycine amide. 7 disulfide bridges follow: C22–C66, C25–C39, C33–C56, C40–C46, C73–C85, C79–C97, and C86–C91. The N-linked (GlcNAc...) asparagine glycan is linked to N114.

The protein belongs to the vasopressin/oxytocin family. As to quaternary structure, interacts with vasopressin receptors V1bR/AVPR1B (Ki=85 pM), V1aR/AVPR1A (Ki=0.6 nM) and V2R/AVPR2 (Ki=4.9 nM). Interacts with oxytocin receptor (OXTR) (Ki=110 nM).

The protein resides in the secreted. In terms of biological role, neurophysin 2 specifically binds vasopressin. Its function is as follows. Vasopressin has a direct antidiuretic action on the kidney, it also causes vasoconstriction of the peripheral vessels. Acts by binding to vasopressin receptors (V1bR/AVPR1B, V1aR/AVPR1A, and V2R/AVPR2). This is Vasopressin-neurophysin 2-copeptin (AVP) from Ovis aries (Sheep).